We begin with the raw amino-acid sequence, 461 residues long: Bifunctional protein GlmU (461 aa).

The segment at 1–236 (MNVLLQELFI…VFEIFGINNR (236 aa)) is pyrophosphorylase. UDP-N-acetyl-alpha-D-glucosamine is bound by residues lysine 27, glutamine 80, 85–86 (GT), 109–111 (YGD), glycine 146, glutamate 160, asparagine 175, and asparagine 234. Position 111 (aspartate 111) interacts with Mg(2+). Residue asparagine 234 coordinates Mg(2+). The linker stretch occupies residues 237 to 257 (FQLMKLEKIYQIEQAKKLLLN). The tract at residues 258–461 (GVTLSDYNRF…SILRKENNSK (204 aa)) is N-acetyltransferase. Lysine 358 is a binding site for UDP-N-acetyl-alpha-D-glucosamine. Histidine 370 (proton acceptor) is an active-site residue. The UDP-N-acetyl-alpha-D-glucosamine site is built by tyrosine 373 and asparagine 384. Acetyl-CoA is bound by residues alanine 387, alanine 430, and arginine 447.

The protein in the N-terminal section; belongs to the N-acetylglucosamine-1-phosphate uridyltransferase family. This sequence in the C-terminal section; belongs to the transferase hexapeptide repeat family. As to quaternary structure, homotrimer. Mg(2+) serves as cofactor.

It localises to the cytoplasm. The enzyme catalyses alpha-D-glucosamine 1-phosphate + acetyl-CoA = N-acetyl-alpha-D-glucosamine 1-phosphate + CoA + H(+). It carries out the reaction N-acetyl-alpha-D-glucosamine 1-phosphate + UTP + H(+) = UDP-N-acetyl-alpha-D-glucosamine + diphosphate. Its pathway is nucleotide-sugar biosynthesis; UDP-N-acetyl-alpha-D-glucosamine biosynthesis; N-acetyl-alpha-D-glucosamine 1-phosphate from alpha-D-glucosamine 6-phosphate (route II): step 2/2. It functions in the pathway nucleotide-sugar biosynthesis; UDP-N-acetyl-alpha-D-glucosamine biosynthesis; UDP-N-acetyl-alpha-D-glucosamine from N-acetyl-alpha-D-glucosamine 1-phosphate: step 1/1. The protein operates within bacterial outer membrane biogenesis; LPS lipid A biosynthesis. Its function is as follows. Catalyzes the last two sequential reactions in the de novo biosynthetic pathway for UDP-N-acetylglucosamine (UDP-GlcNAc). The C-terminal domain catalyzes the transfer of acetyl group from acetyl coenzyme A to glucosamine-1-phosphate (GlcN-1-P) to produce N-acetylglucosamine-1-phosphate (GlcNAc-1-P), which is converted into UDP-GlcNAc by the transfer of uridine 5-monophosphate (from uridine 5-triphosphate), a reaction catalyzed by the N-terminal domain. The chain is Bifunctional protein GlmU from Wigglesworthia glossinidia brevipalpis.